The following is a 394-amino-acid chain: 1-deoxy-D-xylulose 5-phosphate reductoisomerase (394 aa).

NADPH-binding residues include Thr-6, Gly-7, Ser-8, Ile-9, Ala-32, and Asn-124. Lys-125 is a binding site for 1-deoxy-D-xylulose 5-phosphate. NADPH is bound at residue Glu-126. Asp-148 is a binding site for Mn(2+). 4 residues coordinate 1-deoxy-D-xylulose 5-phosphate: Ser-149, Glu-150, Ser-174, and His-197. Glu-150 contacts Mn(2+). NADPH is bound at residue Gly-203. 1-deoxy-D-xylulose 5-phosphate-binding residues include Ser-210, Asn-215, Lys-216, and Glu-219. A Mn(2+)-binding site is contributed by Glu-219.

Belongs to the DXR family. Requires Mg(2+) as cofactor. It depends on Mn(2+) as a cofactor.

The enzyme catalyses 2-C-methyl-D-erythritol 4-phosphate + NADP(+) = 1-deoxy-D-xylulose 5-phosphate + NADPH + H(+). The protein operates within isoprenoid biosynthesis; isopentenyl diphosphate biosynthesis via DXP pathway; isopentenyl diphosphate from 1-deoxy-D-xylulose 5-phosphate: step 1/6. Functionally, catalyzes the NADPH-dependent rearrangement and reduction of 1-deoxy-D-xylulose-5-phosphate (DXP) to 2-C-methyl-D-erythritol 4-phosphate (MEP). This is 1-deoxy-D-xylulose 5-phosphate reductoisomerase from Streptomyces avermitilis (strain ATCC 31267 / DSM 46492 / JCM 5070 / NBRC 14893 / NCIMB 12804 / NRRL 8165 / MA-4680).